The chain runs to 666 residues: Probable potassium transport system protein Kup (666 aa).

12 consecutive transmembrane segments (helical) span residues 16–36 (GFIIALGIVYGDIGTSPLYTM), 58–78 (ISLIIWTLTLITTIKYVLIAL), 100–120 (PWLIIPAMIGGATLLSDGALT), 141–161 (IYQNQTNVIITTLVILIVLFG), 165–185 (FGTGFIGKIFGPVMFIWFSFL), 221–241 (IFILGSIFLATTGAEALYSDL), 253–273 (WPFVKMCIVLSYCGQAAWILA), 292–312 (LTVYVVILATLAAIIASQALI), 343–363 (LYIPVINWILFAVTSCTVLYF), 373–393 (YGLAITITMLMTTILLNYYLI), 399–419 (PFLAHLVMTFFALVEFIFFWA), and 424–444 (FMHGGYVVVILALAIVFVMFI).

It belongs to the HAK/KUP transporter (TC 2.A.72) family.

It is found in the cell membrane. It carries out the reaction K(+)(in) + H(+)(in) = K(+)(out) + H(+)(out). Transport of potassium into the cell. Likely operates as a K(+):H(+) symporter. In Streptococcus pyogenes serotype M18 (strain MGAS8232), this protein is Probable potassium transport system protein Kup.